A 280-amino-acid chain; its full sequence is 2-dehydro-3-deoxyphosphooctonate aldolase (280 aa).

This sequence belongs to the KdsA family.

It is found in the cytoplasm. It carries out the reaction D-arabinose 5-phosphate + phosphoenolpyruvate + H2O = 3-deoxy-alpha-D-manno-2-octulosonate-8-phosphate + phosphate. It participates in carbohydrate biosynthesis; 3-deoxy-D-manno-octulosonate biosynthesis; 3-deoxy-D-manno-octulosonate from D-ribulose 5-phosphate: step 2/3. Its pathway is bacterial outer membrane biogenesis; lipopolysaccharide biosynthesis. The polypeptide is 2-dehydro-3-deoxyphosphooctonate aldolase (Rhizobium meliloti (strain 1021) (Ensifer meliloti)).